We begin with the raw amino-acid sequence, 467 residues long: Inactive pancreatic lipase-related protein 1 (467 aa).

Residues 1-17 form the signal peptide; that stretch reads MVSIWTIALFLLGAAKA. Intrachain disulfides connect cysteine 21/cysteine 27 and cysteine 109/cysteine 120. A glycan (N-linked (GlcNAc...) asparagine) is linked at asparagine 157. The active-site Nucleophile is serine 171. Aspartate 194 acts as the Charge relay system in catalysis. Ca(2+) contacts are provided by glutamate 205, arginine 208, aspartate 210, and aspartate 213. Residues cysteine 255 and cysteine 279 are joined by a disulfide bond. Histidine 281 (charge relay system) is an active-site residue. 3 disulfides stabilise this stretch: cysteine 303/cysteine 314, cysteine 317/cysteine 322, and cysteine 451/cysteine 467. One can recognise a PLAT domain in the interval 356–467; it reads WRYGVSITLS…EDVLLTLTPC (112 aa).

The protein belongs to the AB hydrolase superfamily. Lipase family. In terms of tissue distribution, detected in pancreas (at protein level).

The protein localises to the secreted. In terms of biological role, may function as inhibitor of dietary triglyceride digestion. Lacks detectable lipase activity towards triglycerides, diglycerides, phosphatidylcholine, galactolipids or cholesterol esters (in vitro). This chain is Inactive pancreatic lipase-related protein 1 (PNLIPRP1), found in Canis lupus familiaris (Dog).